The chain runs to 211 residues: Small ribosomal subunit protein uS5 (211 aa).

The segment at 1–41 is disordered; that stretch reads MPGRERRDGGRSADDNKQNDRNERRGGGRRDDRRNQQQDER. Residues 44–107 enclose the S5 DRBM domain; it reads YIERVVTINR…EEARKNFFRV (64 aa).

It belongs to the universal ribosomal protein uS5 family. As to quaternary structure, part of the 30S ribosomal subunit. Contacts proteins S4 and S8.

With S4 and S12 plays an important role in translational accuracy. Functionally, located at the back of the 30S subunit body where it stabilizes the conformation of the head with respect to the body. The chain is Small ribosomal subunit protein uS5 from Corynebacterium glutamicum (strain R).